The following is a 283-amino-acid chain: Foldase protein PrsA 3 (283 aa).

The signal sequence occupies residues 1 to 21; sequence MKKKKIFIGTIISCVMLALSA. Residue C22 is the site of N-palmitoyl cysteine attachment. Residue C22 is the site of S-diacylglycerol cysteine attachment. The PpiC domain maps to 132–222; that stretch reads KPEMKVSHIL…YGYHIIKVTD (91 aa).

This sequence belongs to the PrsA family.

The protein resides in the cell membrane. It carries out the reaction [protein]-peptidylproline (omega=180) = [protein]-peptidylproline (omega=0). Functionally, plays a major role in protein secretion by helping the post-translocational extracellular folding of several secreted proteins. In Bacillus cereus (strain ATCC 14579 / DSM 31 / CCUG 7414 / JCM 2152 / NBRC 15305 / NCIMB 9373 / NCTC 2599 / NRRL B-3711), this protein is Foldase protein PrsA 3 (prsA3).